A 100-amino-acid chain; its full sequence is Large ribosomal subunit protein uL23 (100 aa).

It belongs to the universal ribosomal protein uL23 family. Part of the 50S ribosomal subunit. Contacts protein L29, and trigger factor when it is bound to the ribosome.

Its function is as follows. One of the early assembly proteins it binds 23S rRNA. One of the proteins that surrounds the polypeptide exit tunnel on the outside of the ribosome. Forms the main docking site for trigger factor binding to the ribosome. This Aggregatibacter actinomycetemcomitans (Actinobacillus actinomycetemcomitans) protein is Large ribosomal subunit protein uL23.